The primary structure comprises 1585 residues: Sterol 3-beta-glucosyltransferase (1585 aa).

The span at 1-18 shows a compositional bias: pro residues; sequence MSPPISPTPPPLQPPFPP. Disordered stretches follow at residues 1–154, 177–225, and 249–279; these read MSPP…CDFR, PWEE…PTHT, and YQYA…LPKG. Composition is skewed to polar residues over residues 65 to 77, 105 to 123, and 132 to 148; these read DQAT…SLIP, DAQT…STHE, and PRTS…QMAE. The segment covering 178–194 has biased composition (acidic residues); that stretch reads WEEDDDSDDGEDDDEFI. The span at 255–273 shows a compositional bias: low complexity; sequence ETSSRRTSAAGSESSSEGE. The 169-residue stretch at 387-555 folds into the GRAM 1 domain; that stretch reads ERLMEVFGLE…EAIVDVEKSP (169 aa). The PH domain maps to 438-530; that stretch reads LLVKSGPLHK…WVKAIQKVMF (93 aa). 2 disordered regions span residues 625-645 and 666-852; these read TSHA…LGMA and DGEP…GSES. Residues 670–689 are compositionally biased toward basic and acidic residues; sequence LEEHSQGPHHNDEDASHLPH. Polar residues-rich tracts occupy residues 760–785, 806–817, and 827–840; these read TDSS…QASV, NKPSVVDSNSAE, and SWTS…QMVK. Positions 862-933 constitute a GRAM 2 domain; the sequence is RKFRTFFALS…RDLYGLKAQK (72 aa). Residues serine 1043, arginine 1044, aspartate 1046, isoleucine 1358, histidine 1360, histidine 1373, glycine 1377, threonine 1378, aspartate 1397, and glutamine 1398 each contribute to the UDP-alpha-D-glucose site. The segment at 1499-1555 is disordered; that stretch reads NRVRSRSRSRSRSSQGRFSPRRHTVDDDGWSVVSGGSRSRSGSASAVTSPERRPLNI. Low complexity predominate over residues 1529–1545; it reads SVVSGGSRSRSGSASAV.

The protein belongs to the glycosyltransferase 28 family.

It localises to the cytoplasm. The protein localises to the membrane. It carries out the reaction a sterol + UDP-alpha-D-glucose = a sterol 3-beta-D-glucoside + UDP + H(+). It catalyses the reaction ergosterol + UDP-alpha-D-glucose = ergosteryl 3-beta-D-glucoside + UDP + H(+). Functionally, sterol glycosyltransferase responsible for the glycosylation of ergosterol to form ergosterol-glucoside. In Cryptococcus neoformans var. neoformans serotype D (strain JEC21 / ATCC MYA-565) (Filobasidiella neoformans), this protein is Sterol 3-beta-glucosyltransferase.